Here is a 331-residue protein sequence, read N- to C-terminus: Isopenicillin N synthase (331 aa).

Residues R87, Y91, S183, and Y189 each coordinate isopenicillin N. 6 residues coordinate N-[(5S)-5-amino-5-carboxypentanoyl]-L-cysteinyl-D-valine: R87, Y91, S183, Y189, H214, and D216. In terms of domain architecture, Fe2OG dioxygenase spans 176 to 288; the sequence is KPDDTLASVV…RQSLPFFVNL (113 aa). Residues H214, D216, and H270 each coordinate Fe(2+). R279 is a 2-oxoglutarate binding site. S281 provides a ligand contact to isopenicillin N. S281 serves as a coordination point for N-[(5S)-5-amino-5-carboxypentanoyl]-L-cysteinyl-D-valine.

It belongs to the iron/ascorbate-dependent oxidoreductase family. In terms of assembly, monomer. Fe(2+) serves as cofactor.

It localises to the cytoplasm. The protein resides in the cytosol. It carries out the reaction N-[(5S)-5-amino-5-carboxypentanoyl]-L-cysteinyl-D-valine + O2 = isopenicillin N + 2 H2O. The protein operates within antibiotic biosynthesis; penicillin G biosynthesis; penicillin G from L-alpha-aminoadipate and L-cysteine and L-valine: step 2/3. In terms of biological role, isopenicillin N synthase; part of the gene cluster that mediates the biosynthesis of penicillin, the world's most important antibiotic. IpnA catalyzes the cyclization of the tripeptide N-[(5S)-5-amino-5-carboxypentanoyl]-L-cysteinyl-D-valine (LLD-ACV or ACV) to form isopenicillin N (IPN) that contains the beta-lactam nucleus. The penicillin biosynthesis occurs via 3 enzymatic steps, the first corresponding to the production of the tripeptide N-[(5S)-5-amino-5-carboxypentanoyl]-L-cysteinyl-D-valine (LLD-ACV or ACV) by the NRPS acvA. The tripeptide ACV is then cyclized to isopenicillin N (IPN) by the isopenicillin N synthase ipnA that forms the beta-lactam nucleus. Finally, the alpha-aminoadipyl side chain is exchanged for phenylacetic acid by the isopenicillin N acyltransferase penDE to yield penicillin in the peroxisomal matrix. This chain is Isopenicillin N synthase, found in Emericella nidulans (strain FGSC A4 / ATCC 38163 / CBS 112.46 / NRRL 194 / M139) (Aspergillus nidulans).